Reading from the N-terminus, the 89-residue chain is MTLLASISSIGNVKSISKSNNFSSLSNSSLQSSNSIQCGGCGGGSPLIGTVGNLVGGVLVGTGIIVGTVIGTVNGVVGGLLNGPNCGCH.

Belongs to the hssA/B family.

The protein is HssA/B-like protein 10 (hssl10) of Dictyostelium discoideum (Social amoeba).